A 297-amino-acid chain; its full sequence is HTH-type transcriptional regulator AceR (297 aa).

The HTH lysR-type domain occupies 1-60 (MNINQEQLLMFQAVMETGSFSAAARKLGKVPSAVSMSIANLEIDLNLTLFERKGREPTPT). A DNA-binding region (H-T-H motif) is located at residues 20 to 39 (FSAAARKLGKVPSAVSMSIA).

Belongs to the LysR transcriptional regulatory family. As to quaternary structure, homodimer and homotetramer. Binding of chlorhexidine at the inducer-binding domain causes a quaternary structural change that favors interactions between dimers to form tetramers.

The protein localises to the cytoplasm. In terms of biological role, regulates the expression of the AceI transporter. Binds DNA and chlorhexidine. Binds to regulatory sites within the intergenic region between the aceI and aceR genes, and affects the interaction between RNA polymerase (RNAP) and promoter DNA both in the presence and in the absence of chlorhexidine. In the absence of chlorhexidine, prevents transcription of the aceI gene by disrupting interactions between the promoter DNA and RNAP. In the presence of chlorhexidine, activates expression of aceI. When AceR interacts with chlorhexidine, it undergoes a conformational change and the tetrameric form either releases the DNA or shifts the position of the DNA-binding region to allow RNAP to bind onto the promoter DNA to proceed with aceI transcription. The protein is HTH-type transcriptional regulator AceR of Acinetobacter baumannii (strain ATCC 17978 / DSM 105126 / CIP 53.77 / LMG 1025 / NCDC KC755 / 5377).